We begin with the raw amino-acid sequence, 79 residues long: Protein S100-G (79 aa).

Ser2 is subject to N-acetylserine. 2 consecutive EF-hand domains span residues Ile13–Ser48 and Lys45–Gln79. Residues Gln26 and Glu31 each coordinate Ca(2+). Ser42 carries the post-translational modification Phosphoserine. 5 residues coordinate Ca(2+): Asp58, Asn60, Asp62, Glu64, and Glu69.

Belongs to the S-100 family.

The protein is Protein S100-G (S100G) of Bos taurus (Bovine).